A 149-amino-acid chain; its full sequence is Large ribosomal subunit protein uL30 (149 aa).

It belongs to the universal ribosomal protein uL30 family. In terms of assembly, part of the 50S ribosomal subunit.

This Methanopyrus kandleri (strain AV19 / DSM 6324 / JCM 9639 / NBRC 100938) protein is Large ribosomal subunit protein uL30.